The chain runs to 351 residues: Prostaglandin reductase 2 (351 aa).

A substrate-binding site is contributed by 99-100 (FY). Residues 165–168 (GACG), Lys192, Tyr208, Asn231, 253–259 (CGQISQY), 287–289 (FMV), and Asn337 contribute to the NADP(+) site. Position 288 to 290 (288 to 290 (MVL)) interacts with substrate.

The protein belongs to the NADP-dependent oxidoreductase L4BD family. As to quaternary structure, monomer.

The protein resides in the cytoplasm. The enzyme catalyses 13,14-dihydro-15-oxo-prostaglandin E2 + NAD(+) = 15-oxoprostaglandin E2 + NADH + H(+). It catalyses the reaction 13,14-dihydro-15-oxo-prostaglandin E2 + NADP(+) = 15-oxoprostaglandin E2 + NADPH + H(+). It carries out the reaction 13,14-dihydro-15-oxo-PGF2alpha + NADP(+) = 15-oxoprostaglandin F2alpha + NADPH + H(+). The catalysed reaction is 13,14-dihydro-15-oxo-prostaglandin E1 + NADP(+) = 15-oxoprostaglandin E1 + NADPH + H(+). The enzyme catalyses 13,14-dihydro-15-oxo-prostaglandin F1alpha + NADP(+) = 15-oxoprostaglandin F1alpha + NADPH + H(+). Functionally, functions as 15-oxo-prostaglandin 13-reductase and acts on 15-keto-PGE1, 15-keto-PGE2, 15-keto-PGE1-alpha and 15-keto-PGE2-alpha with highest activity towards 15-keto-PGE2. Overexpression represses transcriptional activity of PPARG and inhibits adipocyte differentiation. The sequence is that of Prostaglandin reductase 2 from Rattus norvegicus (Rat).